The sequence spans 231 residues: Class II histocompatibility antigen, B-L beta chain (231 aa).

The segment at 1-89 (FFQWSATVEC…IVAPLTLQRR (89 aa)) is beta-1. Over 1-194 (FFQWSATVEC…PGDVSRSKLL (194 aa)) the chain is Extracellular. Disulfide bonds link Cys10/Cys74 and Cys111/Cys167. An N-linked (GlcNAc...) asparagine glycan is attached at Asn14. Positions 90-182 (EPKVRIFALQ…SLQQPITQRW (93 aa)) are beta-2. The 89-residue stretch at 91 to 179 (PKVRIFALQS…EHTSLQQPIT (89 aa)) folds into the Ig-like C1-type domain. The segment at 183–194 (EPPGDVSRSKLL) is connecting peptide. Residues 195 to 219 (MGVGGFVLGLVYLALGIFFFLCSKK) form a helical membrane-spanning segment. Topologically, residues 220–231 (GQPDPTSPGILN) are cytoplasmic.

The protein belongs to the MHC class II family.

The protein resides in the membrane. In Gallus gallus (Chicken), this protein is Class II histocompatibility antigen, B-L beta chain.